Consider the following 262-residue polypeptide: Nurim (262 aa).

Topologically, residues 1-4 are nuclear; it reads MAPA. A helical membrane pass occupies residues 5-28; sequence LLLVPAALASFILAFGTGVEFVRF. At 29–58 the chain is on the perinuclear space side; it reads TSLRPLLGGIPESGGPDARQGWLAALQDQS. The helical transmembrane segment at 59 to 80 threads the bilayer; it reads ILVPLAWDLGLLLLFVGQHSLM. The Nuclear segment spans residues 81–97; the sequence is ATETVKAWMSRYFGVLQ. The helical transmembrane segment at 98–114 threads the bilayer; it reads RSLYVACTALALQLVMR. Topologically, residues 115 to 133 are perinuclear space; it reads YWEPVPRGPVLWEAQAEPW. The helical transmembrane segment at 134 to 164 threads the bilayer; the sequence is ATWVPLLCFVLHVISWLLIFSILLVFDYAEL. The Nuclear portion of the chain corresponds to 165–191; sequence MGLKQVYYHVLGLGEPLALKSPRALRL. A helical membrane pass occupies residues 192 to 210; that stretch reads FSHLRHPVCVELLTVLWVV. The Perinuclear space segment spans residues 211 to 216; that stretch reads PTLGTD. The chain crosses the membrane as a helical span at residues 217–234; sequence RLLLALLLTLYLGLAHGL. Over 235–262 the chain is Nuclear; the sequence is DQQDLRYLRAQLQRKLHLLSRPQDGEAE.

This sequence belongs to the nurim family.

The protein localises to the nucleus inner membrane. The chain is Nurim (NRM) from Sus scrofa (Pig).